The chain runs to 284 residues: NADH-cytochrome b5 reductase 1 (284 aa).

Residues 8 to 28 (PFIIFATVAAIISSAVAYYFF) form a helical membrane-spanning segment. Residues 41 to 144 (NDFQKFPLIE…RGPKGFFTYT (104 aa)) enclose the FAD-binding FR-type domain. FAD is bound by residues 124 to 139 (ESKK…GPKG) and 150 to 182 (SFGM…KVSL).

This sequence belongs to the flavoprotein pyridine nucleotide cytochrome reductase family. Monomer. Component of the 2-(3-amino-3-carboxypropyl)histidine synthase complex composed of DPH1, DPH2, DPH3 and a NADH-dependent reductase, predominantly CBR1. Requires FAD as cofactor.

It localises to the mitochondrion outer membrane. The catalysed reaction is 2 Fe(III)-[cytochrome b5] + NADH = 2 Fe(II)-[cytochrome b5] + NAD(+) + H(+). It catalyses the reaction 2 Fe(3+)-[Dph3] + NADH = 2 Fe(2+)-[Dph3] + NAD(+) + H(+). Its pathway is protein modification; peptidyl-diphthamide biosynthesis. Functionally, NADH-dependent reductase for DPH3 and cytochrome b5. Required for the first step of diphthamide biosynthesis, a post-translational modification of histidine which occurs in elongation factor 2. DPH1 and DPH2 transfer a 3-amino-3-carboxypropyl (ACP) group from S-adenosyl-L-methionine (SAM) to a histidine residue, the reaction is assisted by a reduction system comprising DPH3 and a NADH-dependent reductase, predominantly CBR1. By reducing DPH3, also involved in the formation of the tRNA wobble base modification mcm5s 2U (5-methoxycarbonylmethyl-2-thiouridine), mediated by the elongator complex. The cytochrome b5/NADH cytochrome b5 reductase electron transfer system supports the catalytic activity of several sterol biosynthetic enzymes. The sequence is that of NADH-cytochrome b5 reductase 1 (CBR1) from Debaryomyces hansenii (strain ATCC 36239 / CBS 767 / BCRC 21394 / JCM 1990 / NBRC 0083 / IGC 2968) (Yeast).